The primary structure comprises 141 residues: Nucleoside diphosphate kinase (141 aa).

Positions 11, 59, 87, 93, 104, and 114 each coordinate ATP. His-117 acts as the Pros-phosphohistidine intermediate in catalysis.

This sequence belongs to the NDK family. In terms of assembly, homotetramer. It depends on Mg(2+) as a cofactor.

It is found in the cytoplasm. It carries out the reaction a 2'-deoxyribonucleoside 5'-diphosphate + ATP = a 2'-deoxyribonucleoside 5'-triphosphate + ADP. The catalysed reaction is a ribonucleoside 5'-diphosphate + ATP = a ribonucleoside 5'-triphosphate + ADP. Its function is as follows. Major role in the synthesis of nucleoside triphosphates other than ATP. The ATP gamma phosphate is transferred to the NDP beta phosphate via a ping-pong mechanism, using a phosphorylated active-site intermediate. This chain is Nucleoside diphosphate kinase, found in Acidithiobacillus ferrooxidans (strain ATCC 53993 / BNL-5-31) (Leptospirillum ferrooxidans (ATCC 53993)).